Consider the following 144-residue polypeptide: Large ribosomal subunit protein uL13 (144 aa).

Residues 125–144 (YRGPEHPHQAQKPQPLEVKA) are disordered.

This sequence belongs to the universal ribosomal protein uL13 family. As to quaternary structure, part of the 50S ribosomal subunit.

This protein is one of the early assembly proteins of the 50S ribosomal subunit, although it is not seen to bind rRNA by itself. It is important during the early stages of 50S assembly. This is Large ribosomal subunit protein uL13 from Aquifex aeolicus (strain VF5).